A 325-amino-acid chain; its full sequence is Hexaprenyl-diphosphate synthase large subunit ((2E,6E)-farnesyl-diphosphate specific) (325 aa).

The isopentenyl diphosphate site is built by lysine 45, arginine 48, and histidine 77. All-trans-hexaprenyl diphosphate contacts are provided by aspartate 84, aspartate 88, and arginine 93. The Mg(2+) site is built by aspartate 84 and aspartate 88. Arginine 94 serves as a coordination point for isopentenyl diphosphate. Residues lysine 170, threonine 171, and glutamine 208 each coordinate all-trans-hexaprenyl diphosphate.

The protein belongs to the FPP/GGPP synthase family. In terms of assembly, dimer of heterodimer or heterotetramer composed of a small (Hexs-a) and large (Hexs-B) subunit. The cofactor is Mg(2+).

The enzyme catalyses 3 isopentenyl diphosphate + (2E,6E)-farnesyl diphosphate = all-trans-hexaprenyl diphosphate + 3 diphosphate. Functionally, catalyzes the condensation of three molecules of isopentenyl diphosphate with farnesyl diphosphate (FPP) to yield (all-E)-hexaprenyl diphosphate (HexPP; C30), the precursor of the prenyl side chain of menaquinone-6. Large subunit Hexs-B catalyzes the condensation reaction and the final product chain length is cooperatively regulated by both the Hexs-A and Hexs-B subunits using the whole size of the hydrophobic cleft as a ruler. This is Hexaprenyl-diphosphate synthase large subunit ((2E,6E)-farnesyl-diphosphate specific) (hexs-b) from Micrococcus luteus (Micrococcus lysodeikticus).